Here is a 445-residue protein sequence, read N- to C-terminus: Histidinol dehydrogenase (445 aa).

NAD(+)-binding residues include Tyr138, Gln199, and Asn222. The substrate site is built by Ser245, Gln267, and His270. Zn(2+) is bound by residues Gln267 and His270. Catalysis depends on proton acceptor residues Glu335 and His336. Substrate contacts are provided by His336, Asp369, Glu423, and His428. Asp369 serves as a coordination point for Zn(2+). Zn(2+) is bound at residue His428.

Belongs to the histidinol dehydrogenase family. Zn(2+) is required as a cofactor.

The enzyme catalyses L-histidinol + 2 NAD(+) + H2O = L-histidine + 2 NADH + 3 H(+). Its pathway is amino-acid biosynthesis; L-histidine biosynthesis; L-histidine from 5-phospho-alpha-D-ribose 1-diphosphate: step 9/9. Its function is as follows. Catalyzes the sequential NAD-dependent oxidations of L-histidinol to L-histidinaldehyde and then to L-histidine. The chain is Histidinol dehydrogenase from Burkholderia pseudomallei (strain 1710b).